Here is a 235-residue protein sequence, read N- to C-terminus: MNIRNARPEDLMNMQHCNLLCLPENYQMKYYFYHGLSWPQLSYIAEDENGKIVGYVLAKMEEDPDDVPHGHITSLAVKRSHRRLGLAQKLMDQASRAMIENFNAKYVSLHVRKSNRAALHLYSNTLNFQISEVEPKYYADGEDAYAMKRDLTQMADELRRHLELKEKGRHVVLGAIENKVESKGNSPPSSGEACREEKGLAAEDSGGDSKDLSEVSETTESTDVKDSSEASDSAS.

Met-1 carries the N-acetylmethionine modification. The interval 1 to 58 (MNIRNARPEDLMNMQHCNLLCLPENYQMKYYFYHGLSWPQLSYIAEDENGKIVGYVLA) is interaction with NAA15. Positions 1–152 (MNIRNARPED…DAYAMKRDLT (152 aa)) constitute an N-acetyltransferase domain. Lys-136 is subject to N6-acetyllysine; by autocatalysis. The segment at 178–235 (NKVESKGNSPPSSGEACREEKGLAAEDSGGDSKDLSEVSETTESTDVKDSSEASDSAS) is disordered. Phosphoserine occurs at positions 182, 186, and 205. Positions 193–213 (ACREEKGLAAEDSGGDSKDLS) are enriched in basic and acidic residues. Ser-209 is subject to Phosphoserine; by IKKB. Ser-213 and Ser-216 each carry phosphoserine.

It belongs to the acetyltransferase family. ARD1 subfamily. Component of the N-terminal acetyltransferase A complex (also called the NatA complex) composed of NAA10 and NAA15. Within the complex interacts with NAA15. Component of the N-terminal acetyltransferase A (NatA)/HYPK complex at least composed of NAA10, NAA15 and HYPK, which has N-terminal acetyltransferase activity. In complex with NAA15, interacts with HYPK. Component of the N-terminal acetyltransferase E (NatE) complex at least composed of NAA10, NAA15 and NAA50. Within the complex interacts with NAA15; the interaction is required for binding to NAAT50. Interacts with NAAT50. The interaction of the NatA complex with NAA50 reduces the acetylation activity of the NatA complex. Component of the N-terminal acetyltransferase E (NatE)/HYPK complex at least composed of NAA10, NAA15, NAA50 and HYPK. In complex with NAA15, interacts with HYPK; the interaction with HYPK reduces the capacity of the NatA complex to interact with NAA50. Interacts with HIF1A (via its ODD domain); the interaction increases HIF1A protein stability during normoxia, an down-regulates it when induced by hypoxia. Interacts with the ribosome. Binds to MYLK. Interacts with NAA16. Interacts (via its C-terminal domain) with TSC2, leading to its acetylation. Interacts with IKBKB. Interacts with HSPA1A and HSPA1B leading to its acetylation. Post-translationally, cleaved by caspases during apoptosis. In terms of processing, phosphorylation by IKBKB/IKKB at Ser-209 promotes its proteasome-mediated degradation. Autoacetylated at Lys-136 which stimulates its catalytic activity. Ubiquitous.

The protein resides in the cytoplasm. It localises to the nucleus. The enzyme catalyses N-terminal glycyl-[protein] + acetyl-CoA = N-terminal N(alpha)-acetylglycyl-[protein] + CoA + H(+). It carries out the reaction N-terminal L-alanyl-[protein] + acetyl-CoA = N-terminal N(alpha)-acetyl-L-alanyl-[protein] + CoA + H(+). It catalyses the reaction N-terminal L-seryl-[protein] + acetyl-CoA = N-terminal N(alpha)-acetyl-L-seryl-[protein] + CoA + H(+). The catalysed reaction is N-terminal L-valyl-[protein] + acetyl-CoA = N-terminal N(alpha)-acetyl-L-valyl-[protein] + CoA + H(+). The enzyme catalyses N-terminal L-cysteinyl-[protein] + acetyl-CoA = N-terminal N(alpha)-acetyl-L-cysteinyl-[protein] + CoA + H(+). It carries out the reaction N-terminal L-threonyl-[protein] + acetyl-CoA = N-terminal N(alpha)-acetyl-L-threonyl-[protein] + CoA + H(+). Functionally, catalytic subunit of N-terminal acetyltransferase complexes which display alpha (N-terminal) acetyltransferase activity. Acetylates amino termini that are devoid of initiator methionine. The alpha (N-terminal) acetyltransferase activity may be important for vascular, hematopoietic and neuronal growth and development. Without NAA15, displays epsilon (internal) acetyltransferase activity towards HIF1A, thereby promoting its degradation. Represses MYLK kinase activity by acetylation, and thus represses tumor cell migration. Acetylates, and stabilizes TSC2, thereby repressing mTOR activity and suppressing cancer development. Acetylates HSPA1A and HSPA1B at 'Lys-77' which enhances its chaperone activity and leads to preferential binding to co-chaperone HOPX. Acetylates HIST1H4A. Acts as a negative regulator of sister chromatid cohesion during mitosis. The sequence is that of N-alpha-acetyltransferase 10 (NAA10) from Homo sapiens (Human).